A 188-amino-acid chain; its full sequence is Large ribosomal subunit protein bL32m (188 aa).

Positions 110, 113, 123, and 126 each coordinate Zn(2+). The segment at 164-188 (TPSEQDQGKRIIERDRKRPSWFTQN) is disordered. Residues 169-181 (DQGKRIIERDRKR) show a composition bias toward basic and acidic residues.

The protein belongs to the bacterial ribosomal protein bL32 family. As to quaternary structure, component of the mitochondrial large ribosomal subunit (mt-LSU). Mature mammalian 55S mitochondrial ribosomes consist of a small (28S) and a large (39S) subunit. The 28S small subunit contains a 12S ribosomal RNA (12S mt-rRNA) and 30 different proteins. The 39S large subunit contains a 16S rRNA (16S mt-rRNA), a copy of mitochondrial valine transfer RNA (mt-tRNA(Val)), which plays an integral structural role, and 52 different proteins. bL32m has a zinc binding site. MRPL32 precursor is processed by the m-AAA protease (composed of AFG3L2 and SPG7), which cleaves the N-terminal transit peptide. Cleavage by the m-AAA protease takes place prior to assembly into the large subunit, an essential step for mitochondrial ribosome (mitoribosome) assembly. Proper processing by the m-AAA protease is dependent on the zinc-binding region within the tightly folded C-terminal domain of MRPL32: zinc-dependent folding halts degradation initiated from the N-terminus and triggers the release of mature MRPL32.

It localises to the mitochondrion. Component of the mitochondrial large ribosomal subunit (mt-LSU). The mitochondrial ribosome (mitoribosome) is a large ribonucleoprotein complex responsible for the synthesis of proteins inside mitochondria. This chain is Large ribosomal subunit protein bL32m (MRPL32), found in Homo sapiens (Human).